The sequence spans 545 residues: MPVHWVDKLVAELEAKLQNRGKDEYIFNGGLSVSGLQHIGRLRGEVLLGEAVRRELEKRGFRVKQLLTLYTVDPWKGKDEQRREFPDPKAAERYVGWPLDRVPDPKGCHASWVDHFWSDFGPYIGVFTDGKIEVVTTRELYKGRLKEFITTMVLPRRDEIRRVINKYRGRKPYQEGWIPLEPRCARCGRIDSTEALEILGGERVRYRCSYCGYQGESSIEDSKLNWRIEWAGVWWSLGVDFEPYGKDHATPGGSRDSAAELARLLGFEPPEGVWYEWVSLRAGGREADMSSSGFTGITPREWLDIAHPQILRFIYFLHPPTRRVVVDLSEIPSYYSQYYRAERIYFGIEEASTVEETRYLARTYELSHPSNPPAKPPSQIPYSHAAIVAQVVGPERLWTDGLERLKRAGLLGHDEYSIRWAKELLEKAYKWARRYAPKHLKFEIPDSPPEDALRRIEKPDLLEKLAEVLESVEEWSEERIKQALVEFGEGMSSSERRRFYRDFYLAIVGRPEGPRAAPLLSLMDRGFVVDRLRKAANLSRELKGR.

The 'HIGH' region motif lies at 33 to 41; it reads VSGLQHIGR. Positions 288–292 match the 'KMSKS' region motif; that stretch reads DMSSS.

This sequence belongs to the class-I aminoacyl-tRNA synthetase family.

The protein localises to the cytoplasm. It catalyses the reaction tRNA(Lys) + L-lysine + ATP = L-lysyl-tRNA(Lys) + AMP + diphosphate. This is Lysine--tRNA ligase (lysS) from Aeropyrum pernix (strain ATCC 700893 / DSM 11879 / JCM 9820 / NBRC 100138 / K1).